The primary structure comprises 607 residues: Tyrosine-protein kinase RYK (607 aa).

The tract at residues 1-20 is disordered; sequence MRGAARLGRPGRSCLPGARG. The first 25 residues, 1–25, serve as a signal peptide directing secretion; that stretch reads MRGAARLGRPGRSCLPGARGLRAPP. At 26 to 227 the chain is on the extracellular side; it reads PPPLLLLLAL…VHAAPTTSTR (202 aa). One can recognise a WIF domain in the interval 66–194; that stretch reads LYLSEDEVRR…VLNFKRRKMC (129 aa). N-linked (GlcNAc...) asparagine glycans are attached at residues asparagine 139, asparagine 174, asparagine 178, asparagine 182, and asparagine 209. Cysteine 159 and cysteine 194 are oxidised to a cystine. Residues 228-248 traverse the membrane as a helical segment; the sequence is VFYISVGVCCAVIFLVAIILA. At 249–607 the chain is on the cytoplasmic side; the sequence is VLHLHSMKRI…EFHAALGAYV (359 aa). The segment covering 266 to 282 has biased composition (low complexity); it reads ASSSSQGLSQPSTQTTQ. The disordered stretch occupies residues 266–290; it reads ASSSSQGLSQPSTQTTQYLRADTPN. The Protein kinase domain maps to 330–603; that stretch reads ITLKDVLQEG…QCLTEFHAAL (274 aa). ATP contacts are provided by residues 336 to 344 and lysine 364; that span reads LQEGTFGRI. Aspartate 465 acts as the Proton acceptor in catalysis. At tyrosine 495 the chain carries Phosphotyrosine; by autocatalysis.

Belongs to the protein kinase superfamily. Tyr protein kinase family. Interacts with DVL1 (via PDZ domain). Post-translationally, proteolytically cleaved, in part by presenilin, in response to WNT3 stimulation. Cleavage occurs during neuronal differentiation. In terms of tissue distribution, observed in all the tissues examined.

Its subcellular location is the membrane. The protein resides in the nucleus. It localises to the cytoplasm. It carries out the reaction L-tyrosyl-[protein] + ATP = O-phospho-L-tyrosyl-[protein] + ADP + H(+). Functionally, may be a coreceptor along with FZD8 of Wnt proteins, such as WNT1, WNT3, WNT3A and WNT5A. Involved in neuron differentiation, axon guidance, corpus callosum establishment and neurite outgrowth. In response to WNT3 stimulation, receptor C-terminal cleavage occurs in its transmembrane region and allows the C-terminal intracellular product to translocate from the cytoplasm to the nucleus where it plays a crucial role in neuronal development. This chain is Tyrosine-protein kinase RYK, found in Homo sapiens (Human).